The chain runs to 602 residues: Glutamine--fructose-6-phosphate aminotransferase [isomerizing] (602 aa).

C2 (nucleophile; for GATase activity) is an active-site residue. Residues 2 to 217 (CGIVGVVGNT…DQELVIVKAD (216 aa)) form the Glutamine amidotransferase type-2 domain. The disordered stretch occupies residues 67-87 (IGHTRWATHGKPTEDNAHPHR). Positions 77–87 (KPTEDNAHPHR) are enriched in basic and acidic residues. SIS domains lie at 283 to 422 (IIKA…ANGN) and 455 to 592 (VREL…VDKP). K597 (for Fru-6P isomerization activity) is an active-site residue.

In terms of assembly, homodimer.

The protein localises to the cytoplasm. It catalyses the reaction D-fructose 6-phosphate + L-glutamine = D-glucosamine 6-phosphate + L-glutamate. Its function is as follows. Catalyzes the first step in hexosamine metabolism, converting fructose-6P into glucosamine-6P using glutamine as a nitrogen source. The chain is Glutamine--fructose-6-phosphate aminotransferase [isomerizing] from Streptococcus pneumoniae serotype 4 (strain ATCC BAA-334 / TIGR4).